The chain runs to 549 residues: Thermosome subunit alpha (549 aa).

Positions 529 to 549 (EGRQGAECPPNGCMGGMDMRM) are disordered.

This sequence belongs to the TCP-1 chaperonin family. Forms a Heterooligomeric complex of two stacked eight-membered rings.

In terms of biological role, molecular chaperone; binds unfolded polypeptides in vitro, and has a weak ATPase activity. This Thermococcus sp. (strain KS-8) protein is Thermosome subunit alpha (thsA).